The following is a 367-amino-acid chain: Heme A synthase (367 aa).

8 helical membrane-spanning segments follow: residues 25–45 (ALRLWLGFVLLALFCLVLVGG), 111–131 (LIARGIGVIFALPLLYFWLTG), 139–159 (WPLVGILALGALQGFIGWWMV), 174–194 (LATHLVMACLIFAGCMWIMRG), 210–230 (GLAAAIAVFALFQIYLGALVA), 272–292 (FIHRIGAYTLFALVLINMVIA), 305–325 (AVLLFALVTVQAAIGVATLLM), and 327–347 (VPLHWGLLHQAGALVVFGFAV). Position 274 (His274) interacts with heme. Position 335 (His335) interacts with heme.

Belongs to the COX15/CtaA family. Type 2 subfamily. As to quaternary structure, interacts with CtaB. It depends on heme b as a cofactor.

The protein resides in the cell membrane. It carries out the reaction Fe(II)-heme o + 2 A + H2O = Fe(II)-heme a + 2 AH2. It functions in the pathway porphyrin-containing compound metabolism; heme A biosynthesis; heme A from heme O: step 1/1. Functionally, catalyzes the conversion of heme O to heme A by two successive hydroxylations of the methyl group at C8. The first hydroxylation forms heme I, the second hydroxylation results in an unstable dihydroxymethyl group, which spontaneously dehydrates, resulting in the formyl group of heme A. The polypeptide is Heme A synthase (Rhizobium etli (strain ATCC 51251 / DSM 11541 / JCM 21823 / NBRC 15573 / CFN 42)).